We begin with the raw amino-acid sequence, 110 residues long: Ribonuclease P protein component 1 (110 aa).

Belongs to the eukaryotic/archaeal RNase P protein component 1 family. In terms of assembly, consists of a catalytic RNA component and at least 4-5 protein subunits.

Its subcellular location is the cytoplasm. The catalysed reaction is Endonucleolytic cleavage of RNA, removing 5'-extranucleotides from tRNA precursor.. Part of ribonuclease P, a protein complex that generates mature tRNA molecules by cleaving their 5'-ends. In Methanosarcina acetivorans (strain ATCC 35395 / DSM 2834 / JCM 12185 / C2A), this protein is Ribonuclease P protein component 1.